We begin with the raw amino-acid sequence, 1093 residues long: MRDVPKSLGLSVTTPGGSSGAPDSGRHNSLEEINLDQFLKTSNYEDTVKQLDIYYGIVKRQLLRYQSPITGLFPVMSTDQVVGSVRDSVYCASAVWSLYQAYRRIDDDRGKSYELGQSTVKCMRGILECWVKQASRVELFKQRQSNQHALHSKFQLHTGEKIYPDEFYNHLQIDCVSLYLLFLVQMITSGLQIIYTHDEVAFVQNLVYYVERAYRTPDFGMWERGSKYNNGTPEIHASSIGMAKSALEAINGCNLFGEKGASWSVVYVDIDAHNRNRSIFETMLPRESSSKGVDASLLLTLSFPAFASHEDRLVEQTKQNVVNRLRCKMGFKRFTRDGFLSKNEDKSRRYYHSGELKEFEGLECEWPLFFIAMIIDGVFKNNNEQIEEFQNDLRRCLRTDVNGDPVVTMYYAPDGDGSYMRAPSQSLFLWGQSFFIIAQLLTAGLLHINELDPIRRYLPSYNRPRRAGRYSAFQGTATDLVVQIVLIAESMRLQAMMATYGIQTQTPHEVEPVQIWSSTELIKVYQHLGVNNKVGLSGRPCRPVGSLGTSKVYRICGMTVLCYPLIFEVSDFYLYRDMALLIDDIKTELQFVGKYWRLSGRPTVCLLIREEHMRDPQFKEMLDLLAMLKKGYCDGMKVRIGRLQNLISSSCIEHLDFMNQSDLTDNENAFSQINHEYIGYQSLTDVPKALTYVEEKISVAHFDTKPTPDIINALRSTDSIYCLCQLWGIILNREGPHFEVNGLNVNTALTQLYHRAGSLRYWRAVRYCSSLLHHIVDSISPFITTVLVNGKELTVGIIGQKETVFDKPMTPAEIQNVMYTSVQPYDVIQAVLQQEVVLYCGRLIATNPSMFRGILKIRIGWVLEAMRIYLQISGQQSIDVDNLSPFQVRILLQKVLTVSEWAVEEKLTTLQRRQLEGCLCRVPKHFYNKIWEILQRTPQGILTQGHHLPATPTLTNMSRGELTFNLLVEETLICIDRPERRQITVELLCIVATILNRNPELHFKQALDLDGILAEAFAMYCKDNNIQHQPKPEHEQTKNEDLKAFYSLPYSETTGYLARAAVNKVLQGGIFSTNEEDVQLDGDRLHDDNCKVS.

Residues 1–27 (MRDVPKSLGLSVTTPGGSSGAPDSGRH) are disordered. 3 calmodulin-binding regions span residues 6-27 (KSLG…SGRH), 751-778 (QLYH…IVDS), and 905-936 (EKLT…ILQR). C1090 carries the S-farnesyl cysteine lipid modification.

The protein belongs to the phosphorylase b kinase regulatory chain family. In terms of processing, although the final Cys may be farnesylated, the terminal tripeptide is probably not removed, and the C-terminus is not methylated.

The protein localises to the cell membrane. It participates in glycan biosynthesis; glycogen metabolism. Phosphorylase b kinase catalyzes the phosphorylation of serine in certain substrates, including troponin I. The beta chain acts as a regulatory unit and modulates the activity of the holoenzyme in response to phosphorylation. In Drosophila melanogaster (Fruit fly), this protein is Probable phosphorylase b kinase regulatory subunit beta.